The sequence spans 156 residues: tRNA-specific adenosine deaminase (156 aa).

Residues 2-120 enclose the CMP/dCMP-type deaminase domain; the sequence is TNDIYFMTLA…GSLMNLLQQS (119 aa). His-53 serves as a coordination point for Zn(2+). Residue Glu-55 is the Proton donor of the active site. Cys-83 and Cys-86 together coordinate Zn(2+).

It belongs to the cytidine and deoxycytidylate deaminase family. In terms of assembly, homodimer. It depends on Zn(2+) as a cofactor.

It carries out the reaction adenosine(34) in tRNA + H2O + H(+) = inosine(34) in tRNA + NH4(+). Functionally, catalyzes the deamination of adenosine to inosine at the wobble position 34 of tRNA(Arg2). This chain is tRNA-specific adenosine deaminase, found in Staphylococcus aureus (strain Mu50 / ATCC 700699).